A 385-amino-acid polypeptide reads, in one-letter code: Trehalose-phosphate phosphatase A (385 aa).

Residues 1–21 (MDMKSGHSSPVMTDSPPISNS) form a disordered region.

It belongs to the trehalose phosphatase family. A divalent metal cation is required as a cofactor. In terms of tissue distribution, expressed in flowers.

It carries out the reaction alpha,alpha-trehalose 6-phosphate + H2O = alpha,alpha-trehalose + phosphate. It participates in glycan biosynthesis; trehalose biosynthesis. Functionally, removes the phosphate from trehalose 6-phosphate to produce free trehalose. Trehalose accumulation in plant may improve abiotic stress tolerance. The polypeptide is Trehalose-phosphate phosphatase A (TPPA) (Arabidopsis thaliana (Mouse-ear cress)).